We begin with the raw amino-acid sequence, 370 residues long: 4-hydroxy-3-methylbut-2-en-1-yl diphosphate synthase (flavodoxin) (370 aa).

Residues C265, C268, C300, and E307 each coordinate [4Fe-4S] cluster.

The protein belongs to the IspG family. [4Fe-4S] cluster serves as cofactor.

It carries out the reaction (2E)-4-hydroxy-3-methylbut-2-enyl diphosphate + oxidized [flavodoxin] + H2O + 2 H(+) = 2-C-methyl-D-erythritol 2,4-cyclic diphosphate + reduced [flavodoxin]. It functions in the pathway isoprenoid biosynthesis; isopentenyl diphosphate biosynthesis via DXP pathway; isopentenyl diphosphate from 1-deoxy-D-xylulose 5-phosphate: step 5/6. Functionally, converts 2C-methyl-D-erythritol 2,4-cyclodiphosphate (ME-2,4cPP) into 1-hydroxy-2-methyl-2-(E)-butenyl 4-diphosphate. The protein is 4-hydroxy-3-methylbut-2-en-1-yl diphosphate synthase (flavodoxin) of Symbiobacterium thermophilum (strain DSM 24528 / JCM 14929 / IAM 14863 / T).